A 114-amino-acid polypeptide reads, in one-letter code: Small ribosomal subunit protein bS6 (114 aa).

The protein belongs to the bacterial ribosomal protein bS6 family.

Its function is as follows. Binds together with bS18 to 16S ribosomal RNA. This is Small ribosomal subunit protein bS6 from Phocaeicola vulgatus (strain ATCC 8482 / DSM 1447 / JCM 5826 / CCUG 4940 / NBRC 14291 / NCTC 11154) (Bacteroides vulgatus).